We begin with the raw amino-acid sequence, 286 residues long: Pantothenate synthetase (286 aa).

30 to 37 lines the ATP pocket; the sequence is MGNLHDGH. His-37 (proton donor) is an active-site residue. Gln-61 contributes to the (R)-pantoate binding site. Gln-61 contributes to the beta-alanine binding site. 148-151 lines the ATP pocket; the sequence is GKKD. Residue Gln-154 participates in (R)-pantoate binding. ATP-binding positions include Val-177 and 185–188; that span reads LSSR.

It belongs to the pantothenate synthetase family. In terms of assembly, homodimer.

The protein localises to the cytoplasm. It catalyses the reaction (R)-pantoate + beta-alanine + ATP = (R)-pantothenate + AMP + diphosphate + H(+). Its pathway is cofactor biosynthesis; (R)-pantothenate biosynthesis; (R)-pantothenate from (R)-pantoate and beta-alanine: step 1/1. Its function is as follows. Catalyzes the condensation of pantoate with beta-alanine in an ATP-dependent reaction via a pantoyl-adenylate intermediate. The sequence is that of Pantothenate synthetase from Psychrobacter sp. (strain PRwf-1).